A 386-amino-acid chain; its full sequence is Leupaxin (386 aa).

The residue at position 1 (Met1) is an N-acetylmethionine. Positions Glu3 to Thr15 match the LD motif 1 motif. A Phosphoserine modification is found at Ser19. Positions Ser19–Asn52 are disordered. The residue at position 22 (Tyr22) is a Phosphotyrosine. Over residues Tyr22 to Asn52 the composition is skewed to polar residues. At Ser54 the chain carries Phosphoserine. At Tyr62 the chain carries Phosphotyrosine. 2 consecutive short sequence motifs (LD motif) follow at residues Asn70–Val82 and Gln92–Met103. Tyr72 is modified (phosphotyrosine; by LYN). The residue at position 81 (Ser81) is a Phosphoserine. LIM zinc-binding domains follow at residues Gly150–Ser208, Pro209–Ser267, Pro268–Gly326, and Thr327–Gln386.

It belongs to the paxillin family. As to quaternary structure, interacts with unphosphorylated ITGA4. Interacts with AR and SRF. Interacts with PTK2B/PYK2, PTPN22 and PTPN12. Interacts (via LD motif 3) with LYN and the interaction is induced upon B-cell antigen receptor (BCR) activation. Interacts (via LD motif 3) with PTK2/FAK. Phosphorylated on tyrosine residues. Phosphorylation on Tyr-72 is important for its inhibitory function. Bombesin stimulates phosphorylation on Tyr-22, Tyr-62 and Tyr-72. In terms of tissue distribution, expressed in osteoclasts (at protein level). Highly expressed in vascular smooth muscle.

It is found in the cytoplasm. It localises to the cell junction. The protein localises to the focal adhesion. The protein resides in the nucleus. Its subcellular location is the perinuclear region. It is found in the cell projection. It localises to the podosome. The protein localises to the cell membrane. Functionally, transcriptional coactivator for androgen receptor (AR) and serum response factor (SRF). Contributes to the regulation of cell adhesion, spreading and cell migration and acts as a negative regulator in integrin-mediated cell adhesion events. Suppresses the integrin-induced tyrosine phosphorylation of paxillin (PXN). May play a critical role as an adapter protein in the formation of the adhesion zone in osteoclasts. Negatively regulates B-cell antigen receptor (BCR) signaling. This is Leupaxin (Lpxn) from Mus musculus (Mouse).